Consider the following 430-residue polypeptide: Carbamoyl phosphate synthase arginine-specific small chain (430 aa).

A mitochondrion-targeting transit peptide spans Met1 to Leu9. The 189-residue stretch at His219–Ser407 folds into the Glutamine amidotransferase type-1 domain. Cys296 functions as the Nucleophile in the catalytic mechanism. Catalysis depends on residues His380 and Glu382.

It belongs to the CarA family. In terms of assembly, heterodimer composed of 2 chains; the small (or glutamine) chain promotes the hydrolysis of glutamine to ammonia, which is used by the large (or ammonia) chain to synthesize carbamoyl phosphate.

Its subcellular location is the mitochondrion matrix. It catalyses the reaction hydrogencarbonate + L-glutamine + 2 ATP + H2O = carbamoyl phosphate + L-glutamate + 2 ADP + phosphate + 2 H(+). The catalysed reaction is L-glutamine + H2O = L-glutamate + NH4(+). Its pathway is amino-acid biosynthesis; L-arginine biosynthesis; carbamoyl phosphate from bicarbonate: step 1/1. Functionally, small subunit of the arginine-specific carbamoyl phosphate synthase (CPSase). CPSase catalyzes the formation of carbamoyl phosphate from the ammonia moiety of glutamine, carbonate, and phosphate donated by ATP, the first step of the arginine biosynthetic pathway. The small subunit (glutamine amidotransferase) binds and cleaves glutamine to supply the large subunit with the substrate ammonia. The sequence is that of Carbamoyl phosphate synthase arginine-specific small chain (CPA1) from Candida albicans (strain SC5314 / ATCC MYA-2876) (Yeast).